The chain runs to 289 residues: Nucleotide-binding protein MS1718 (289 aa).

Position 8–15 (8–15 (GRSGAGKS)) interacts with ATP. Residue 56-59 (DIRN) coordinates GTP.

This sequence belongs to the RapZ-like family.

Displays ATPase and GTPase activities. The protein is Nucleotide-binding protein MS1718 of Mannheimia succiniciproducens (strain KCTC 0769BP / MBEL55E).